The primary structure comprises 215 residues: Large ribosomal subunit protein uL16m (215 aa).

Residues Met1 to Trp36 constitute a mitochondrion transit peptide.

It belongs to the universal ribosomal protein uL16 family. Component of the mitochondrial large ribosomal subunit (mt-LSU). Mature yeast 74S mitochondrial ribosomes consist of a small (37S) and a large (54S) subunit. The 37S small subunit contains a 15S ribosomal RNA (15S mt-rRNA) and at least 32 different proteins. The 54S large subunit contains a 21S rRNA (21S mt-rRNA) and at least 45 different proteins.

The protein localises to the mitochondrion. Component of the mitochondrial ribosome (mitoribosome), a dedicated translation machinery responsible for the synthesis of mitochondrial genome-encoded proteins, including at least some of the essential transmembrane subunits of the mitochondrial respiratory chain. The mitoribosomes are attached to the mitochondrial inner membrane and translation products are cotranslationally integrated into the membrane. The chain is Large ribosomal subunit protein uL16m (mrpl16) from Schizosaccharomyces pombe (strain 972 / ATCC 24843) (Fission yeast).